We begin with the raw amino-acid sequence, 196 residues long: DnaA initiator-associating protein DiaA (196 aa).

An SIS domain is found at L34–D196.

The protein belongs to the SIS family. DiaA subfamily. As to quaternary structure, homotetramer; dimer of dimers.

Its function is as follows. Required for the timely initiation of chromosomal replication via direct interactions with the DnaA initiator protein. The sequence is that of DnaA initiator-associating protein DiaA from Enterobacter sp. (strain 638).